The primary structure comprises 116 residues: Neuropeptide Y receptor type 1 (116 aa).

Residues 1–6 (LVLIAV) form a helical membrane-spanning segment. Residues 7 to 24 (ERHQLIINPRGWRPSNRH) are Cytoplasmic-facing. Residues 25–45 (AYVGIAVIWVLAVASSLPFLI) form a helical membrane-spanning segment. Over 46-81 (YQVLTDEPFQNVTLDAFKDKYVCFDKFPSDSHRLSY) the chain is Extracellular. An N-linked (GlcNAc...) asparagine glycan is attached at N56. Residues 82–102 (TTLLLVLQYFGPLCFIFICYF) form a helical membrane-spanning segment. Topologically, residues 103–116 (KIYIRLKRRNNMMD) are cytoplasmic.

This sequence belongs to the G-protein coupled receptor 1 family.

The protein localises to the cell membrane. Functionally, receptor for neuropeptide Y and peptide YY. This is Neuropeptide Y receptor type 1 (NPY1R) from Ovis aries (Sheep).